Consider the following 121-residue polypeptide: Large ribosomal subunit protein uL14 (121 aa).

Belongs to the universal ribosomal protein uL14 family. In terms of assembly, part of the 50S ribosomal subunit. Forms a cluster with proteins L3 and L19. In the 70S ribosome, L14 and L19 interact and together make contacts with the 16S rRNA in bridges B5 and B8.

Functionally, binds to 23S rRNA. Forms part of two intersubunit bridges in the 70S ribosome. The sequence is that of Large ribosomal subunit protein uL14 from Synechococcus elongatus (strain ATCC 33912 / PCC 7942 / FACHB-805) (Anacystis nidulans R2).